The chain runs to 99 residues: Class II hydrophobin 2 (99 aa).

A signal peptide spans 1 to 15 (MKFFVVAALFAGALA). Intrachain disulfides connect Cys-30–Cys-79 and Cys-40–Cys-70.

It belongs to the cerato-ulmin hydrophobin family. In terms of assembly, homotetramer. Further self-assembles to form highly ordered films at water-air interfaces through intermolecular interactions.

The protein localises to the secreted. It localises to the cell wall. Aerial growth, conidiation, and dispersal of filamentous fungi in the environment rely upon a capability of their secreting small amphipathic proteins called hydrophobins (HPBs) with low sequence identity. Class I can self-assemble into an outermost layer of rodlet bundles on aerial cell surfaces, conferring cellular hydrophobicity that supports fungal growth, development and dispersal; whereas Class II form highly ordered films at water-air interfaces through intermolecular interactions but contribute nothing to the rodlet structure. HYD2 is a class II hydrophobin that contributes to the fruiting body development. This Cordyceps militaris (Caterpillar fungus) protein is Class II hydrophobin 2.